The following is a 77-amino-acid chain: Conotoxin VnMKLT1-012 (77 aa).

An N-terminal signal peptide occupies residues 1–22 (MKLTCMMIVAVLFLTAWTFVTA). The propeptide occupies 23-48 (DDSRNGLDYLFPKARHEMNPKASRDI). Intrachain disulfides connect Cys-51–Cys-68, Cys-58–Cys-72, and Cys-67–Cys-76.

This sequence belongs to the conotoxin O1 superfamily. In terms of tissue distribution, expressed by the venom duct.

Its subcellular location is the secreted. The chain is Conotoxin VnMKLT1-012 from Conus ventricosus (Mediterranean cone).